The sequence spans 418 residues: uncharacterized protein (418 aa).

Residues 282–297 (EEHSSIAKLDSEEKIR) show a composition bias toward basic and acidic residues. The tract at residues 282–346 (EEHSSIAKLD…SASVDDVSEE (65 aa)) is disordered. A compositionally biased stretch (low complexity) spans 304–316 (SSTSLSPDPTSDN). Over residues 322 to 337 (WVSSQDTSKNSSNLAS) the composition is skewed to polar residues.

This is an uncharacterized protein from Schizosaccharomyces pombe (strain 972 / ATCC 24843) (Fission yeast).